The sequence spans 312 residues: Olfactory receptor 1D2 (312 aa).

Residues 1-25 (MDGGNQSEGSEFLLLGMSESPEQQQ) lie on the Extracellular side of the membrane. N-linked (GlcNAc...) asparagine glycosylation occurs at Asn5. A helical membrane pass occupies residues 26–49 (ILFWMFLSMYLVTVVGNVLIILAI). Residues 50 to 57 (NSDSHLHT) lie on the Cytoplasmic side of the membrane. The chain crosses the membrane as a helical span at residues 58 to 79 (PMYFFLANLSFTDLFFVTNTIP). Over 80-100 (KMLVNLQSQNKAISYAGCLTQ) the chain is Extracellular. Residues Cys97 and Cys189 are joined by a disulfide bond. A helical membrane pass occupies residues 101-120 (LYFLVSLVALDNLILAVMAY). The Cytoplasmic portion of the chain corresponds to 121 to 139 (DRYVAICCPLHYTTAMSPK). Residues 140–158 (LCILLLSLCWVLSVLYGLI) form a helical membrane-spanning segment. Residues 159 to 196 (HTILMTRVTFCGSRKIHYIFCEMYVLLRMACSNIQINH) lie on the Extracellular side of the membrane. Asn195 carries an N-linked (GlcNAc...) asparagine glycan. A helical transmembrane segment spans residues 197-219 (TVLIATGCFIFLIPFGFVIISYV). The Cytoplasmic segment spans residues 220-236 (LIIRAILRIPSVSKKYK). A helical transmembrane segment spans residues 237–259 (AFSTCASHLGAVSLFYGTLCMVY). At 260 to 271 (LKPLHTFSVKDS) the chain is on the extracellular side. The chain crosses the membrane as a helical span at residues 272–291 (VATVMYAVVTPMMNPFIYSL). Topologically, residues 292-312 (RNKDMHGALGRLLDTHFKRLT) are cytoplasmic.

This sequence belongs to the G-protein coupled receptor 1 family.

The protein localises to the cell membrane. Its function is as follows. Odorant receptor. The chain is Olfactory receptor 1D2 (OR1D2) from Gorilla gorilla gorilla (Western lowland gorilla).